We begin with the raw amino-acid sequence, 353 residues long: UPF0283 membrane protein YPTS_2342 (353 aa).

3 consecutive transmembrane segments (helical) span residues 71-91 (MVTA…VQWV), 101-121 (IALG…GSVV), and 214-234 (ESAL…FIAW).

This sequence belongs to the UPF0283 family.

It is found in the cell inner membrane. This chain is UPF0283 membrane protein YPTS_2342, found in Yersinia pseudotuberculosis serotype IB (strain PB1/+).